Reading from the N-terminus, the 165-residue chain is uncharacterized protein (165 aa).

This is an uncharacterized protein from Acanthamoeba polyphaga mimivirus (APMV).